The primary structure comprises 180 residues: Acireductone dioxygenase (180 aa).

The Fe(2+) site is built by His-97, His-99, Glu-103, and His-141. Ni(2+) is bound by residues His-97, His-99, Glu-103, and His-141.

The protein belongs to the acireductone dioxygenase (ARD) family. As to quaternary structure, monomer. Fe(2+) is required as a cofactor. Ni(2+) serves as cofactor.

The enzyme catalyses 1,2-dihydroxy-5-(methylsulfanyl)pent-1-en-3-one + O2 = 3-(methylsulfanyl)propanoate + CO + formate + 2 H(+). The catalysed reaction is 1,2-dihydroxy-5-(methylsulfanyl)pent-1-en-3-one + O2 = 4-methylsulfanyl-2-oxobutanoate + formate + 2 H(+). The protein operates within amino-acid biosynthesis; L-methionine biosynthesis via salvage pathway; L-methionine from S-methyl-5-thio-alpha-D-ribose 1-phosphate: step 5/6. Its function is as follows. Catalyzes 2 different reactions between oxygen and the acireductone 1,2-dihydroxy-3-keto-5-methylthiopentene (DHK-MTPene) depending upon the metal bound in the active site. Fe-containing acireductone dioxygenase (Fe-ARD) produces formate and 2-keto-4-methylthiobutyrate (KMTB), the alpha-ketoacid precursor of methionine in the methionine recycle pathway. Ni-containing acireductone dioxygenase (Ni-ARD) produces methylthiopropionate, carbon monoxide and formate, and does not lie on the methionine recycle pathway. This is Acireductone dioxygenase from Acidiphilium cryptum (strain JF-5).